The chain runs to 258 residues: Venom plasminogen activator (258 aa).

The signal sequence occupies residues 1–18 (MVLIRVLANLLILQLSYA). Positions 19–24 (QKSSEL) are excised as a propeptide. In terms of domain architecture, Peptidase S1 spans 25-249 (VVGGDECNIN…YTDWIQSIIS (225 aa)). 6 disulfide bridges follow: Cys-31–Cys-163, Cys-50–Cys-66, Cys-98–Cys-256, Cys-142–Cys-210, Cys-174–Cys-189, and Cys-200–Cys-225. Asn-44 carries N-linked (GlcNAc...) asparagine glycosylation. Active-site charge relay system residues include His-65 and Asp-110. The active-site Charge relay system is the Ser-204.

Belongs to the peptidase S1 family. Snake venom subfamily. As to quaternary structure, monomer. As to expression, expressed by the venom gland.

The protein resides in the secreted. In terms of biological role, snake venom serine protease that activates plasminogen. Shows a preferential cleavage at Arg-|-Xaa instead of Lys-|-Xaa bonds. The sequence is that of Venom plasminogen activator from Agkistrodon piscivorus leucostoma (Western cottonmouth).